The chain runs to 522 residues: Protein nucleotidyltransferase YdiU (522 aa).

8 residues coordinate ATP: Gly109, Gly111, Arg112, Lys132, Asp144, Gly145, Arg195, and Arg202. Catalysis depends on Asp271, which acts as the Proton acceptor. The Mg(2+) site is built by Asn272 and Asp281. An ATP-binding site is contributed by Asp281.

This sequence belongs to the SELO family. The cofactor is Mg(2+). Mn(2+) is required as a cofactor.

The enzyme catalyses L-seryl-[protein] + ATP = 3-O-(5'-adenylyl)-L-seryl-[protein] + diphosphate. The catalysed reaction is L-threonyl-[protein] + ATP = 3-O-(5'-adenylyl)-L-threonyl-[protein] + diphosphate. It carries out the reaction L-tyrosyl-[protein] + ATP = O-(5'-adenylyl)-L-tyrosyl-[protein] + diphosphate. It catalyses the reaction L-histidyl-[protein] + UTP = N(tele)-(5'-uridylyl)-L-histidyl-[protein] + diphosphate. The enzyme catalyses L-seryl-[protein] + UTP = O-(5'-uridylyl)-L-seryl-[protein] + diphosphate. The catalysed reaction is L-tyrosyl-[protein] + UTP = O-(5'-uridylyl)-L-tyrosyl-[protein] + diphosphate. Functionally, nucleotidyltransferase involved in the post-translational modification of proteins. It can catalyze the addition of adenosine monophosphate (AMP) or uridine monophosphate (UMP) to a protein, resulting in modifications known as AMPylation and UMPylation. In Burkholderia lata (strain ATCC 17760 / DSM 23089 / LMG 22485 / NCIMB 9086 / R18194 / 383), this protein is Protein nucleotidyltransferase YdiU.